The sequence spans 500 residues: MGLLTGDTLGPLAVAVAIFLLLVDLMHRRRRWATRYPPGPTPVPMVGNLLQMDFQEPICYFSQLQGRFGNVFSLELAWTPVVVLNGLEAVREALVHRSEDTADRPPMPIYDHLGLGPESQGLFLARYGRAWREQRRFSLSTLRNFGLGRKSLEQWVTEEASCLCAAFAEQAGRPFGPGALLNKAVSNVISSLTYGRRFEYDDPRLLQLLELTQQALKQDSGFLREALNSIPVLLHIPGLASKVFSAQKAIITLTNEMIQEHRKTRDPTQPPRHLIDAFVDEIEKAKGNPKTSFNEENLCMVTSDLFIAGMVSTSITLTWALLLMILHPDVQRRVQQEIDEVIGREQLPEMGDQTRMPFTVAVIHEVQRFGDIVPLGVPHMTSRDTEVQGFLIPKGTTLITNLSSVLKDEKVWKKPFRFYPEHFLDAQGHFVKHEAFMPFSAGRRVCLGEPLARMELFLFFTCLLQRFSFSVPAGQPRPSDHGVFTFLKVPAPFQLCVEPR.

Residue Cys-446 coordinates heme.

This sequence belongs to the cytochrome P450 family. The cofactor is heme. Liver. Also detected in several other tissues.

It is found in the endoplasmic reticulum membrane. Its subcellular location is the microsome membrane. The enzyme catalyses an organic molecule + reduced [NADPH--hemoprotein reductase] + O2 = an alcohol + oxidized [NADPH--hemoprotein reductase] + H2O + H(+). High activity for the hydroxylation of bunitrolol and imipramine; low activity on debrisoquine. This chain is Cytochrome P450 2D15 (CYP2D15), found in Canis lupus familiaris (Dog).